A 274-amino-acid polypeptide reads, in one-letter code: Octanoyl-[GcvH]:protein N-octanoyltransferase (274 aa).

Positions 37–242 (QGNDAVVRTW…AMKTLGATLS (206 aa)) constitute a BPL/LPL catalytic domain. Cysteine 141 acts as the Acyl-thioester intermediate in catalysis.

The protein belongs to the octanoyltransferase LipL family.

The catalysed reaction is N(6)-octanoyl-L-lysyl-[glycine-cleavage complex H protein] + L-lysyl-[lipoyl-carrier protein] = N(6)-octanoyl-L-lysyl-[lipoyl-carrier protein] + L-lysyl-[glycine-cleavage complex H protein]. Its pathway is protein modification; protein lipoylation via endogenous pathway; protein N(6)-(lipoyl)lysine from octanoyl-[acyl-carrier-protein]. Its function is as follows. Catalyzes the amidotransfer (transamidation) of the octanoyl moiety from octanoyl-GcvH to the lipoyl domain of the E2 subunit of lipoate-dependent enzymes. The sequence is that of Octanoyl-[GcvH]:protein N-octanoyltransferase from Macrococcus caseolyticus (strain JCSC5402) (Macrococcoides caseolyticum).